We begin with the raw amino-acid sequence, 484 residues long: Replication-associated protein (484 aa).

A Nuclear localization signal motif is present at residues 146 to 153 (IRKYHQSV).

The protein localises to the host nucleus. Its function is as follows. Plays an essential for the replication of viral DNA. Presumably cleaves viral genomic dsRNA replicative form to initiate rolling circle replication. The polypeptide is Replication-associated protein (Chaetoceros (Chaetoceros sp. DNA virus 7)).